The primary structure comprises 711 residues: Progesterone receptor (711 aa).

A modulating, Pro-Rich region spans residues 1–347 (MEDKSKQCLQ…YGFDALPRKI (347 aa)). 2 NR C4-type zinc fingers span residues 348 to 368 (CLICSDEASGCHYGALTCGSC) and 384 to 408 (CAGRNDCIGDKIRRKNCPSCRLKKC). The nuclear receptor DNA-binding region spans 348–420 (CLICSDEASG…AGMVLGGRKF (73 aa)). An NR LBD domain is found at 457–691 (QEVQYFPELL…EFPEMMTEVI (235 aa)).

This sequence belongs to the nuclear hormone receptor family. NR3 subfamily. As to expression, expressed in all tissues examined: highly expressed in testis and brain. Also expressed in heart, lung, liver, kidney, stomach and small intestine.

The protein localises to the nucleus. Its function is as follows. The steroid hormones and their receptors are involved in the regulation of eukaryotic gene expression and affect cellular proliferation and differentiation in target tissues. The protein is Progesterone receptor (pgr) of Rana dybowskii (Dybovsky's frog).